The chain runs to 53 residues: Large ribosomal subunit protein bL33A (53 aa).

Belongs to the bacterial ribosomal protein bL33 family.

This is Large ribosomal subunit protein bL33A from Mycoplasmoides gallisepticum (strain R(low / passage 15 / clone 2)) (Mycoplasma gallisepticum).